Reading from the N-terminus, the 267-residue chain is MLLVLIDVDGFMGQLYNEKGTQTILIPREVVIFYWEKNTASKILQLFFHGGIDPIFEKINQRSFSFQSRHIHHFALDESPLPNSIALPTDTLQAFKAGKKMIFQHLVKITKDHEQILLLHKGGPEGEWVRSFNIPNATVQNLNDLCCPSVEKLVLKKKDYISSSIGCPKHIQGSNHCPVFECHVLFKWIQENTSIVQGVLERPSLPYEKAVLFIEHRINMVDNHPFKKDSIKQNQKKKNWIATQFVQHGMYVDNGILGKIYNKYSLF.

It belongs to the asfivirus I267L family.

The polypeptide is Protein I267L (Ornithodoros (relapsing fever ticks)).